The following is a 205-amino-acid chain: LexA repressor (205 aa).

The H-T-H motif DNA-binding region spans 28–48 (RAEIAKRLGFKSANAAEEHLK). Residues S122 and K159 each act as for autocatalytic cleavage activity in the active site.

The protein belongs to the peptidase S24 family. As to quaternary structure, homodimer.

The catalysed reaction is Hydrolysis of Ala-|-Gly bond in repressor LexA.. Represses a number of genes involved in the response to DNA damage (SOS response), including recA and lexA. In the presence of single-stranded DNA, RecA interacts with LexA causing an autocatalytic cleavage which disrupts the DNA-binding part of LexA, leading to derepression of the SOS regulon and eventually DNA repair. The sequence is that of LexA repressor from Shewanella woodyi (strain ATCC 51908 / MS32).